We begin with the raw amino-acid sequence, 487 residues long: Multiple inositol polyphosphate phosphatase 1 (487 aa).

The first 30 residues, 1–30 (MLRAPGCLLRTSVAPAAALAAALLSSLARC), serve as a signal peptide directing secretion. The active site involves His89. Asn242 and Asn481 each carry an N-linked (GlcNAc...) asparagine glycan. Residues 484 to 487 (SDEL) carry the Prevents secretion from ER motif.

The protein belongs to the histidine acid phosphatase family. MINPP1 subfamily. In terms of processing, N-glycosylated. Widely expressed with highest levels in kidney, liver, cerebellum and placenta.

It is found in the endoplasmic reticulum lumen. It localises to the secreted. Its subcellular location is the cell membrane. The catalysed reaction is 1D-myo-inositol hexakisphosphate + H2O = 1D-myo-inositol 1,2,4,5,6-pentakisphosphate + phosphate. It catalyses the reaction 1D-myo-inositol 1,2,4,5,6-pentakisphosphate + H2O = 1D-myo-inositol 1,2,5,6-tetrakisphosphate + phosphate. It carries out the reaction 1D-myo-inositol 1,2,5,6-tetrakisphosphate + H2O = 1D-myo-inositol 1,2,6-trisphosphate + phosphate. The enzyme catalyses 1D-myo-inositol 1,2,6-trisphosphate + H2O = 1D-myo-inositol 1,2-bisphosphate + phosphate. The catalysed reaction is 1D-myo-inositol 1,2-bisphosphate + H2O = 1D-myo-inositol 2-phosphate + phosphate. It catalyses the reaction 1D-myo-inositol hexakisphosphate + H2O = 1D-myo-inositol 1,2,3,5,6-pentakisphosphate + phosphate. It carries out the reaction 1D-myo-inositol 1,2,3,5,6-pentakisphosphate + H2O = 1D-myo-inositol 1,2,3,6-tetrakisphosphate + phosphate. The enzyme catalyses 1D-myo-inositol 1,2,3,6-tetrakisphosphate + H2O = 1D-myo-inositol 1,2,3-trisphosphate + phosphate. The catalysed reaction is 1D-myo-inositol 1,2,3-trisphosphate + H2O = 1D-myo-inositol 2,3-bisphosphate + phosphate. It catalyses the reaction 1D-myo-inositol 2,3-bisphosphate + H2O = 1D-myo-inositol 2-phosphate + phosphate. It carries out the reaction 1D-myo-inositol 1,3,4,5,6-pentakisphosphate + H2O = 1D-myo-inositol 1,4,5,6-tetrakisphosphate + phosphate. The enzyme catalyses 1D-myo-inositol 1,4,5,6-tetrakisphosphate + H2O = 1D-myo-inositol 1,4,5-trisphosphate + phosphate. The catalysed reaction is (2R)-2,3-bisphosphoglycerate + H2O = (2R)-2-phosphoglycerate + phosphate. In terms of biological role, multiple inositol polyphosphate phosphatase that hydrolyzes 1D-myo-inositol 1,3,4,5,6-pentakisphosphate (InsP5[2OH]) and 1D-myo-inositol hexakisphosphate (InsP6) to a range of less phosphorylated inositol phosphates. This regulates the availability of these various small molecule second messengers and metal chelators which control many aspects of cell physiology. Has a weak in vitro activity towards 1D-myo-inositol 1,4,5-trisphosphate which is unlikely to be physiologically relevant. By regulating intracellular inositol polyphosphates pools, which act as metal chelators, it may control the availability of intracellular calcium and iron, which are important for proper neuronal development and homeostasis. May have a dual substrate specificity, and function as a 2,3-bisphosphoglycerate 3-phosphatase hydrolyzing 2,3-bisphosphoglycerate to 2-phosphoglycerate. 2,3-bisphosphoglycerate (BPG) is formed as part of the Rapoport-Luebering glycolytic bypass and is a regulator of systemic oxygen homeostasis as the major allosteric effector of hemoglobin. The sequence is that of Multiple inositol polyphosphate phosphatase 1 from Homo sapiens (Human).